We begin with the raw amino-acid sequence, 597 residues long: Putative diflavin flavoprotein A 3 (597 aa).

The zinc metallo-hydrolase stretch occupies residues 59–254 (QRGTTANSYL…YPAQTYAPSH (196 aa)). Residues 283–421 (VALIYASAYG…MCEEAGTDFA (139 aa)) enclose the Flavodoxin-like domain. Residues 449–597 (LGRLVGSLCV…VHHRKSGDHY (149 aa)) form a flavodoxin-reductase-like region.

The protein in the N-terminal section; belongs to the zinc metallo-hydrolase group 3 family. This sequence in the C-terminal section; belongs to the flavodoxin reductase family. The cofactor is Fe cation.

Mediates electron transfer from NADH to oxygen, reducing it to water. This modular protein has 3 redox cofactors, in other organisms the same activity requires 2 or 3 proteins. The polypeptide is Putative diflavin flavoprotein A 3 (dfa3) (Synechocystis sp. (strain ATCC 27184 / PCC 6803 / Kazusa)).